Here is a 246-residue protein sequence, read N- to C-terminus: Bacteriorhodopsin-II-like protein (246 aa).

Helical transmembrane passes span Glu-7–Val-27, Thr-45–Ile-65, Tyr-82–Ala-102, Leu-107–Met-127, Ile-135–Glu-155, Trp-182–Val-202, and Glu-205–Leu-225. Residue Lys-217 is modified to N6-(retinylidene)lysine.

Belongs to the archaeal/bacterial/fungal opsin family. The covalent binding of retinal to the apoprotein, bacterioopsin, generates bacteriorhodopsin.

The protein resides in the cell membrane. Functionally, has no proton-pumping activity but is potentially capable of functioning as a sensory SRII-like protein. The chromophore contains 36.5% all-trans-, 7.6% 11-cis- and 56.4% 13-cis-retinal in the dark and 30.1% 11-cis- and 47.7% 13-cis-retinal upon illumination with &gt;460 nm light. The protein is Bacteriorhodopsin-II-like protein (bop2) of Haloquadratum walsbyi (strain DSM 16790 / HBSQ001).